We begin with the raw amino-acid sequence, 231 residues long: 2-C-methyl-D-erythritol 4-phosphate cytidylyltransferase (231 aa).

This sequence belongs to the IspD/TarI cytidylyltransferase family. IspD subfamily.

It catalyses the reaction 2-C-methyl-D-erythritol 4-phosphate + CTP + H(+) = 4-CDP-2-C-methyl-D-erythritol + diphosphate. Its pathway is isoprenoid biosynthesis; isopentenyl diphosphate biosynthesis via DXP pathway; isopentenyl diphosphate from 1-deoxy-D-xylulose 5-phosphate: step 2/6. In terms of biological role, catalyzes the formation of 4-diphosphocytidyl-2-C-methyl-D-erythritol from CTP and 2-C-methyl-D-erythritol 4-phosphate (MEP). The polypeptide is 2-C-methyl-D-erythritol 4-phosphate cytidylyltransferase (Shewanella piezotolerans (strain WP3 / JCM 13877)).